A 141-amino-acid polypeptide reads, in one-letter code: Small ribosomal subunit protein uS19 (141 aa).

This sequence belongs to the universal ribosomal protein uS19 family.

In terms of biological role, protein S19 forms a complex with S13 that binds strongly to the 16S ribosomal RNA. This chain is Small ribosomal subunit protein uS19, found in Halorubrum lacusprofundi (strain ATCC 49239 / DSM 5036 / JCM 8891 / ACAM 34).